Reading from the N-terminus, the 227-residue chain is Lipoprotein-releasing system ATP-binding protein LolD (227 aa).

Residues Leu6 to Arg227 form the ABC transporter domain. Ala43–Ser50 lines the ATP pocket.

It belongs to the ABC transporter superfamily. Lipoprotein translocase (TC 3.A.1.125) family. The complex is composed of two ATP-binding proteins (LolD) and two transmembrane proteins (LolC and LolE).

The protein resides in the cell inner membrane. Its function is as follows. Part of the ABC transporter complex LolCDE involved in the translocation of mature outer membrane-directed lipoproteins, from the inner membrane to the periplasmic chaperone, LolA. Responsible for the formation of the LolA-lipoprotein complex in an ATP-dependent manner. This is Lipoprotein-releasing system ATP-binding protein LolD from Ruegeria sp. (strain TM1040) (Silicibacter sp.).